A 256-amino-acid polypeptide reads, in one-letter code: Probable cyclic nucleotide phosphodiesterase Fisuc_1441/FSU_1912 (256 aa).

Asp-20, His-22, Asp-59, Asn-89, His-156, His-196, and His-198 together coordinate Fe cation. Residues His-22, Asp-59, and 89-90 (NH) contribute to the AMP site. His-198 is a binding site for AMP.

Belongs to the cyclic nucleotide phosphodiesterase class-III family. Fe(2+) is required as a cofactor.

This chain is Probable cyclic nucleotide phosphodiesterase Fisuc_1441/FSU_1912, found in Fibrobacter succinogenes (strain ATCC 19169 / S85).